A 262-amino-acid chain; its full sequence is uncharacterized protein (262 aa).

6 consecutive transmembrane segments (helical) span residues 21 to 41 (ILITYFLCWAGFLFSFSVGKF), 94 to 114 (IVSNFMGCLIIMFALGALAYL), 139 to 159 (LLILFIFTVINPLTGLIGVNL), 164 to 184 (LIAVLPHGFFEFFGFATAVVV), 205 to 225 (IVILIACSFIFIFIAGMLEPI), and 240 to 260 (LLAAFATGYKNLFLYLISMLF).

The protein resides in the cell membrane. This is an uncharacterized protein from Methanocaldococcus jannaschii (strain ATCC 43067 / DSM 2661 / JAL-1 / JCM 10045 / NBRC 100440) (Methanococcus jannaschii).